A 190-amino-acid chain; its full sequence is Carbonic anhydrase 2 (190 aa).

It belongs to the beta-class carbonic anhydrase family. In terms of assembly, homohexamer.

It localises to the cytoplasm. The catalysed reaction is hydrogencarbonate + H(+) = CO2 + H2O. Functionally, reversible hydration of carbon dioxide. The polypeptide is Carbonic anhydrase 2 (Flaveria linearis (Narrowleaf yellowtops)).